The following is a 485-amino-acid chain: NADH-quinone oxidoreductase subunit N (485 aa).

The next 14 membrane-spanning stretches (helical) occupy residues 8 to 28 (LIAL…MLSI), 35 to 55 (FLNA…LWFV), 71 to 91 (GFAM…CTFA), 105 to 125 (FYLL…ANHL), 127 to 147 (ALFL…GYAF), 159 to 179 (YTIL…LVYA), 203 to 223 (LLAG…LVPF), 235 to 255 (PAPV…GVVM), 271 to 291 (VVLG…ALSQ), 297 to 317 (LLGY…IALQ), 326 to 346 (VGVY…VVSL), 373 to 393 (AAVM…LGFI), 408 to 430 (WWLV…RVAV), and 455 to 475 (IVVL…QPLI).

It belongs to the complex I subunit 2 family. In terms of assembly, NDH-1 is composed of 13 different subunits. Subunits NuoA, H, J, K, L, M, N constitute the membrane sector of the complex.

It localises to the cell inner membrane. It carries out the reaction a quinone + NADH + 5 H(+)(in) = a quinol + NAD(+) + 4 H(+)(out). In terms of biological role, NDH-1 shuttles electrons from NADH, via FMN and iron-sulfur (Fe-S) centers, to quinones in the respiratory chain. The immediate electron acceptor for the enzyme in this species is believed to be ubiquinone. Couples the redox reaction to proton translocation (for every two electrons transferred, four hydrogen ions are translocated across the cytoplasmic membrane), and thus conserves the redox energy in a proton gradient. The sequence is that of NADH-quinone oxidoreductase subunit N from Salmonella schwarzengrund (strain CVM19633).